The chain runs to 207 residues: Large ribosomal subunit protein uL4 (207 aa).

The segment at 44–85 is disordered; that stretch reads MRQGTHKTKNRAEVSGGGRKPWRQKGTGRARQGSIRSPQWRG.

The protein belongs to the universal ribosomal protein uL4 family. In terms of assembly, part of the 50S ribosomal subunit.

In terms of biological role, one of the primary rRNA binding proteins, this protein initially binds near the 5'-end of the 23S rRNA. It is important during the early stages of 50S assembly. It makes multiple contacts with different domains of the 23S rRNA in the assembled 50S subunit and ribosome. Forms part of the polypeptide exit tunnel. The sequence is that of Large ribosomal subunit protein uL4 from Geobacillus thermodenitrificans (strain NG80-2).